We begin with the raw amino-acid sequence, 154 residues long: Transcriptional repressor NrdR (154 aa).

Residues Cys-3–Cys-34 fold into a zinc finger. The ATP-cone domain maps to Pro-49–Glu-139.

Belongs to the NrdR family. Zn(2+) is required as a cofactor.

In terms of biological role, negatively regulates transcription of bacterial ribonucleotide reductase nrd genes and operons by binding to NrdR-boxes. The chain is Transcriptional repressor NrdR from Pseudomonas putida (strain W619).